A 132-amino-acid polypeptide reads, in one-letter code: Small ribosomal subunit protein uS8 (132 aa).

It belongs to the universal ribosomal protein uS8 family. In terms of assembly, part of the 30S ribosomal subunit. Contacts proteins S5 and S12.

Its function is as follows. One of the primary rRNA binding proteins, it binds directly to 16S rRNA central domain where it helps coordinate assembly of the platform of the 30S subunit. This is Small ribosomal subunit protein uS8 from Mycoplasmopsis synoviae (strain 53) (Mycoplasma synoviae).